The sequence spans 493 residues: E3 ubiquitin-protein ligase Hakai (493 aa).

Disordered regions lie at residues Met1–Leu20 and Ile28–Glu61. Residues Asp7 to Ser16 show a composition bias toward polar residues. Residues Cys109–Asn149 form an RING-type zinc finger. Residues Cys148–His206 are HYB domain. The C2H2-type zinc-finger motif lies at Phe164–His190. The disordered stretch occupies residues Tyr253–Gln493. Pro residues-rich tracts occupy residues Pro262–Pro276, Ala342–Ser352, Ala372–Gly389, and Met399–Gly412. The segment covering Asn427 to Pro444 has biased composition (polar residues). Positions Pro459–Gln469 are enriched in pro residues. Positions Gly470–Pro480 are enriched in low complexity.

Belongs to the Hakai family. As to quaternary structure, homodimer. Interacts with tyrosine-phosphorylated SRC substrates. Component of the WMM complex, a N6-methyltransferase complex composed of a catalytic subcomplex, named MAC, and of an associated subcomplex, named MACOM. Component of the MACOM subcomplex.

It localises to the nucleus speckle. The protein resides in the nucleus. The protein localises to the nucleoplasm. It carries out the reaction S-ubiquitinyl-[E2 ubiquitin-conjugating enzyme]-L-cysteine + [acceptor protein]-L-lysine = [E2 ubiquitin-conjugating enzyme]-L-cysteine + N(6)-ubiquitinyl-[acceptor protein]-L-lysine.. The protein operates within protein modification; protein ubiquitination. Functionally, E3 ubiquitin-protein ligase that mediates ubiquitination of several tyrosine-phosphorylated Src substrates. Associated component of the WMM complex, a complex that mediates N6-methyladenosine (m6A) methylation of RNAs, a modification that plays a role in the efficiency of mRNA splicing and RNA processing. This chain is E3 ubiquitin-protein ligase Hakai, found in Gallus gallus (Chicken).